The chain runs to 148 residues: Succinate dehydrogenase assembly factor 3, mitochondrial (148 aa).

The transit peptide at 1-12 (MYALRPTLRRSA) directs the protein to the mitochondrion. Residues 129-148 (RGTEGDLEDGDGGESGQKSQ) form a disordered region.

It belongs to the complex I LYR family. SDHAF3 subfamily. Interacts with the iron-sulfur protein subunit within the SDH catalytic dimer.

Its subcellular location is the mitochondrion matrix. Functionally, plays an essential role in the assembly of succinate dehydrogenase (SDH), an enzyme complex (also referred to as respiratory complex II) that is a component of both the tricarboxylic acid (TCA) cycle and the mitochondrial electron transport chain, and which couples the oxidation of succinate to fumarate with the reduction of ubiquinone (coenzyme Q) to ubiquinol. Promotes maturation of the iron-sulfur protein subunit of the SDH catalytic dimer, protecting it from the deleterious effects of oxidants. May act together with SDHAF1. This chain is Succinate dehydrogenase assembly factor 3, mitochondrial, found in Neurospora crassa (strain ATCC 24698 / 74-OR23-1A / CBS 708.71 / DSM 1257 / FGSC 987).